A 430-amino-acid polypeptide reads, in one-letter code: Tektin-2 (430 aa).

Coiled-coil stretches lie at residues 75-162 and 226-380; these read KEML…FQHL and KNRA…IACK.

The protein belongs to the tektin family. In terms of assembly, microtubule inner protein component of sperm flagellar doublet microtubules. May interact with CCDC172. In terms of processing, tyrosine phosphorylated. Ubiquitinated, leading to its degradation. Deubiquitinated by USP16, promoting its stability.

The protein resides in the cytoplasm. The protein localises to the cytoskeleton. It localises to the cilium axoneme. Its subcellular location is the flagellum axoneme. It is found in the microtubule organizing center. Microtubule inner protein (MIP) part of the dynein-decorated doublet microtubules (DMTs) in cilia and flagellar axoneme. Plays a key role in the assembly or attachment of the inner dynein arm to microtubules in sperm flagella and tracheal cilia. Forms filamentous polymers in the walls of ciliary and flagellar microtubules. In Rattus norvegicus (Rat), this protein is Tektin-2 (Tekt2).